A 407-amino-acid chain; its full sequence is Putative glycosyltransferase YtcC (407 aa).

This sequence belongs to the glycosyltransferase group 1 family. Glycosyltransferase 4 subfamily.

This is Putative glycosyltransferase YtcC (ytcC) from Bacillus subtilis (strain 168).